A 183-amino-acid polypeptide reads, in one-letter code: Ribosome-recycling factor (183 aa).

This sequence belongs to the RRF family.

It localises to the cytoplasm. Its function is as follows. Responsible for the release of ribosomes from messenger RNA at the termination of protein biosynthesis. May increase the efficiency of translation by recycling ribosomes from one round of translation to another. This is Ribosome-recycling factor from Deinococcus deserti (strain DSM 17065 / CIP 109153 / LMG 22923 / VCD115).